Here is a 246-residue protein sequence, read N- to C-terminus: tRNA (guanine-N(1)-)-methyltransferase (246 aa).

S-adenosyl-L-methionine-binding positions include Gly-113 and 132–137 (LGDYVL).

Belongs to the RNA methyltransferase TrmD family. In terms of assembly, homodimer.

Its subcellular location is the cytoplasm. The enzyme catalyses guanosine(37) in tRNA + S-adenosyl-L-methionine = N(1)-methylguanosine(37) in tRNA + S-adenosyl-L-homocysteine + H(+). Specifically methylates guanosine-37 in various tRNAs. This chain is tRNA (guanine-N(1)-)-methyltransferase, found in Lactiplantibacillus plantarum (strain ATCC BAA-793 / NCIMB 8826 / WCFS1) (Lactobacillus plantarum).